The primary structure comprises 279 residues: Probable endonuclease 4 (279 aa).

Zn(2+) is bound by residues histidine 69, histidine 109, glutamate 145, aspartate 179, histidine 182, histidine 216, aspartate 229, histidine 231, and glutamate 261.

It belongs to the AP endonuclease 2 family. The cofactor is Zn(2+).

The catalysed reaction is Endonucleolytic cleavage to 5'-phosphooligonucleotide end-products.. Functionally, endonuclease IV plays a role in DNA repair. It cleaves phosphodiester bonds at apurinic or apyrimidinic (AP) sites, generating a 3'-hydroxyl group and a 5'-terminal sugar phosphate. This chain is Probable endonuclease 4, found in Serratia proteamaculans (strain 568).